We begin with the raw amino-acid sequence, 503 residues long: Exonuclease V, mitochondrial (503 aa).

[4Fe-4S] cluster contacts are provided by Cys-92, Cys-467, Cys-470, and Cys-476.

Belongs to the EXO5 family. In terms of assembly, monomer. Mg(2+) is required as a cofactor. [4Fe-4S] cluster serves as cofactor.

The protein localises to the mitochondrion. Functionally, single strand DNA specific 5' exonuclease involved in mitochondrial DNA replication and recombination. Releases dinucleotides as main products of catalysis. Has the capacity to slide across 5'double-stranded DNA or 5'RNA sequences and resumes cutting two nucleotides downstream of the double-stranded-to-single-stranded junction or RNA-to-DNA junction, respectively. The polypeptide is Exonuclease V, mitochondrial (EXO5) (Candida glabrata (strain ATCC 2001 / BCRC 20586 / JCM 3761 / NBRC 0622 / NRRL Y-65 / CBS 138) (Yeast)).